A 77-amino-acid chain; its full sequence is Translation initiation factor IF-1, chloroplastic (77 aa).

One can recognise an S1-like domain in the interval 1–71 (MKEQKLIHEG…TRGRIIYRLR (71 aa)).

Belongs to the IF-1 family. As to quaternary structure, component of the 30S ribosomal translation pre-initiation complex which assembles on the 30S ribosome in the order IF-2 and IF-3, IF-1 and N-formylmethionyl-tRNA(fMet); mRNA recruitment can occur at any time during PIC assembly.

It localises to the plastid. It is found in the chloroplast. Functionally, one of the essential components for the initiation of protein synthesis. Stabilizes the binding of IF-2 and IF-3 on the 30S subunit to which N-formylmethionyl-tRNA(fMet) subsequently binds. Helps modulate mRNA selection, yielding the 30S pre-initiation complex (PIC). Upon addition of the 50S ribosomal subunit IF-1, IF-2 and IF-3 are released leaving the mature 70S translation initiation complex. The protein is Translation initiation factor IF-1, chloroplastic of Cabomba caroliniana (Carolina fanwort).